The following is a 238-amino-acid chain: LexA repressor (238 aa).

The segment at residues 26–46 (FDEMKDALELRSKSGIHRLIS) is a DNA-binding region (H-T-H motif). Active-site for autocatalytic cleavage activity residues include serine 159 and lysine 197.

Belongs to the peptidase S24 family. As to quaternary structure, homodimer.

It carries out the reaction Hydrolysis of Ala-|-Gly bond in repressor LexA.. Represses a number of genes involved in the response to DNA damage (SOS response), including recA and lexA. In the presence of single-stranded DNA, RecA interacts with LexA causing an autocatalytic cleavage which disrupts the DNA-binding part of LexA, leading to derepression of the SOS regulon and eventually DNA repair. This chain is LexA repressor, found in Gluconobacter oxydans (strain 621H) (Gluconobacter suboxydans).